The following is a 1186-amino-acid chain: Partner and localizer of BRCA2 (1186 aa).

The tract at residues 1–160 (MDEPPGKPLS…QKRTFISQER (160 aa)) is required for its oligomerization and is important for its focal concentration at DNA damage sites. Residues 1 to 200 (MDEPPGKPLS…PVTEIRTHLL (200 aa)) form an interaction with RAD51 region. Residues 1 to 319 (MDEPPGKPLS…SKSGQLPTSS (319 aa)) form an interaction with BRCA1 region. Residues 1–579 (MDEPPGKPLS…EDSLSWSNSA (579 aa)) are DNA-binding (with the preference D loop &gt; dsDNA &gt; ssDNA). Residues 9-41 (LSCEEKEKLKEKLAFLKREYSKTLARLQRAQRA) adopt a coiled-coil conformation. Disordered regions lie at residues 52–72 (VEEQ…HSEP) and 95–157 (KTSI…TFIS). Residues 120 to 141 (RTDDTQEHFPHRVSDPSGEQKQ) show a composition bias toward basic and acidic residues. Basic residues predominate over residues 143-152 (LPSRRKKQQK). Phosphoserine is present on residues S172 and S190. The tract at residues 252–273 (TLSDSGSSQHLEHIPPKGSSEL) is disordered. S285 bears the Phosphoserine mark. The segment at 346 to 365 (KEQNQTEKSLKSPSDTLDGR) is disordered. A phosphoserine mark is found at S376 and S387. The segment at 395–446 (SCTVPEGLLFPAEYYVRTTRSMSNCQRKVAVEAVIQSHLDVKKKGFKNKNKD) is chAM (Chromatin-association motif); required for chromatin association, mediates nucleosome association. Residues 440 to 525 (FKNKNKDASK…RKSACTPASD (86 aa)) are disordered. S454 is subject to Phosphoserine. The segment covering 467-488 (GTCTGQPSSRTSQKLLSLTKVS) has biased composition (polar residues). Phosphoserine is present on S660. Disordered stretches follow at residues 679–698 (PGKS…KTGL) and 774–798 (KQFD…QGQP). Residues 687 to 698 (PNSQSQHTKTGL) show a composition bias toward polar residues. Residues 775 to 1186 (QFDSSGSPAK…DGNIFVYHYS (412 aa)) form a required for interaction with POLH and POLH DNA synthesis stimulation region. S781 bears the Phosphoserine mark. The tract at residues 853-1186 (GNLQLVSELK…DGNIFVYHYS (334 aa)) is interaction with RAD51, BRCA2 and POLH. 7 WD repeats span residues 854–915 (NLQL…WHFA), 917–961 (VPVL…QVLL), 962–1009 (KSGN…LMPP), 1010–1052 (EETI…MHID), 1058–1109 (SVCH…MLYC), 1115–1153 (AGRF…LLPP), and 1155–1186 (SDQH…YHYS).

As to quaternary structure, homooligomer; dissociated upon DNA damage thus allowing association with BRCA1. Oligomerization is essential for its focal accumulation at DNA breaks. Part of a BRCA complex containing BRCA1, BRCA2 and PALB2. Interacts with BRCA1 and this interaction is essential for its function in HRR. Interacts with RAD51AP1 and MORF4L1/MRG15. Component of the homologous recombination repair (HR) complex composed of ERCC5/XPG, BRCA2, PALB2, DSS1 and RAD51. Within the complex, interacts with ERCC5/XPG and BRCA2. Interacts with BRCA2, RAD51C, RAD51 and XRCC3; the interactions are direct and it may serve as a scaffold for a HR complex containing PALB2, BRCA2, RAD51C, RAD51 and XRCC3. Interacts with POLH; the interaction is direct.

The protein localises to the nucleus. In terms of biological role, plays a critical role in homologous recombination repair (HRR) through its ability to recruit BRCA2 and RAD51 to DNA breaks. Strongly stimulates the DNA strand-invasion activity of RAD51, stabilizes the nucleoprotein filament against a disruptive BRC3-BRC4 polypeptide and helps RAD51 to overcome the suppressive effect of replication protein A (RPA). Functionally cooperates with RAD51AP1 in promoting of D-loop formation by RAD51. Serves as the molecular scaffold in the formation of the BRCA1-PALB2-BRCA2 complex which is essential for homologous recombination. Via its WD repeats is proposed to scaffold a HR complex containing RAD51C and BRCA2 which is thought to play a role in HR-mediated DNA repair. Essential partner of BRCA2 that promotes the localization and stability of BRCA2. Also enables its recombinational repair and checkpoint functions of BRCA2. May act by promoting stable association of BRCA2 with nuclear structures, allowing BRCA2 to escape the effects of proteasome-mediated degradation. Binds DNA with high affinity for D loop, which comprises single-stranded, double-stranded and branched DNA structures. May play a role in the extension step after strand invasion at replication-dependent DNA double-strand breaks; together with BRCA2 is involved in both POLH localization at collapsed replication forks and DNA polymerization activity. The sequence is that of Partner and localizer of BRCA2 (PALB2) from Homo sapiens (Human).